A 206-amino-acid polypeptide reads, in one-letter code: Small ribosomal subunit protein uS4 (206 aa).

Residues 96-156 (TRLDNVVYRM…EKSRTQARIK (61 aa)) form the S4 RNA-binding domain.

It belongs to the universal ribosomal protein uS4 family. As to quaternary structure, part of the 30S ribosomal subunit. Contacts protein S5. The interaction surface between S4 and S5 is involved in control of translational fidelity.

One of the primary rRNA binding proteins, it binds directly to 16S rRNA where it nucleates assembly of the body of the 30S subunit. In terms of biological role, with S5 and S12 plays an important role in translational accuracy. The polypeptide is Small ribosomal subunit protein uS4 (Shewanella putrefaciens (strain CN-32 / ATCC BAA-453)).